The chain runs to 258 residues: ATP synthase subunit a (258 aa).

Helical transmembrane passes span 30–50, 85–105, 122–142, 151–171, 198–218, and 230–250; these read SSYF…VAMS, FFPF…LGMF, LIVT…YGVF, LFVP…IEII, FAGF…LAGI, and LEFL…CIYL.

Belongs to the ATPase A chain family. As to quaternary structure, F-type ATPases have 2 components, CF(1) - the catalytic core - and CF(0) - the membrane proton channel. CF(1) has five subunits: alpha(3), beta(3), gamma(1), delta(1), epsilon(1). CF(0) has three main subunits: a(1), b(2) and c(9-12). The alpha and beta chains form an alternating ring which encloses part of the gamma chain. CF(1) is attached to CF(0) by a central stalk formed by the gamma and epsilon chains, while a peripheral stalk is formed by the delta and b chains.

The protein localises to the cell inner membrane. Its function is as follows. Key component of the proton channel; it plays a direct role in the translocation of protons across the membrane. The sequence is that of ATP synthase subunit a from Maricaulis maris (strain MCS10) (Caulobacter maris).